We begin with the raw amino-acid sequence, 335 residues long: Adenosine deaminase (335 aa).

His-12 and His-14 together coordinate Zn(2+). Positions 14 and 16 each coordinate substrate. A Zn(2+)-binding site is contributed by His-197. The Proton donor role is filled by Glu-200. Asp-278 lines the Zn(2+) pocket.

It belongs to the metallo-dependent hydrolases superfamily. Adenosine and AMP deaminases family. Adenosine deaminase subfamily. Zn(2+) serves as cofactor.

It carries out the reaction adenosine + H2O + H(+) = inosine + NH4(+). The catalysed reaction is 2'-deoxyadenosine + H2O + H(+) = 2'-deoxyinosine + NH4(+). Functionally, catalyzes the hydrolytic deamination of adenosine and 2-deoxyadenosine. In Clostridium botulinum (strain ATCC 19397 / Type A), this protein is Adenosine deaminase.